The primary structure comprises 785 residues: Rho-GTPase-activating protein RGD3 (785 aa).

S2 carries the post-translational modification N-acetylserine. Residues 31–463 (ISLRNTYWTK…PQETANADVR (433 aa)) form the F-BAR domain. Residues 313-340 (SNGNAGNRKKKSYGELTHSDNEHEEKSN) are disordered. Residues 329 to 339 (THSDNEHEEKS) show a composition bias toward basic and acidic residues. The 183-residue stretch at 520 to 702 (IILRQIEKEP…TFFINERTVE (183 aa)) folds into the Rho-GAP domain. The interval 732 to 785 (TAPIHSTPKPPPNDKDGHFIPRPFKTSSTPTTPERPKRKSGLFLPINVNDVPST) is disordered. Position 759 is a phosphoserine (S759). 3 positions are modified to phosphothreonine: T760, T762, and T763.

Phosphorylation at the C-terminus negatively regulates the activity and the polarized localization.

The protein resides in the cytoplasmic vesicle membrane. It localises to the cell membrane. It is found in the bud tip. Its subcellular location is the bud neck. GTPase activating protein (GAP) for RHO3 and CDC42 that binds membranes through phosphatidylinositol 4,5-bisphosphate. Plays a key role in cell polarity. Modulates the RHO3 distribution at the plasma membrane and its polarity during growth. This is Rho-GTPase-activating protein RGD3 from Saccharomyces cerevisiae (strain ATCC 204508 / S288c) (Baker's yeast).